A 481-amino-acid chain; its full sequence is Cobyric acid synthase (481 aa).

Positions 249 to 436 (GLHIVCLRLS…LHGMFRDDAF (188 aa)) constitute a GATase cobBQ-type domain. C331 functions as the Nucleophile in the catalytic mechanism. H428 is a catalytic residue.

The protein belongs to the CobB/CobQ family. CobQ subfamily.

Its pathway is cofactor biosynthesis; adenosylcobalamin biosynthesis. Its function is as follows. Catalyzes amidations at positions B, D, E, and G on adenosylcobyrinic A,C-diamide. NH(2) groups are provided by glutamine, and one molecule of ATP is hydrogenolyzed for each amidation. The sequence is that of Cobyric acid synthase from Jannaschia sp. (strain CCS1).